The following is a 511-amino-acid chain: Maturase K (511 aa).

It belongs to the intron maturase 2 family. MatK subfamily.

Its subcellular location is the plastid. The protein localises to the chloroplast. In terms of biological role, usually encoded in the trnK tRNA gene intron. Probably assists in splicing its own and other chloroplast group II introns. The sequence is that of Maturase K from Hordeum murinum subsp. leporinum (Mouse barley).